We begin with the raw amino-acid sequence, 423 residues long: Elongation factor 1-alpha (423 aa).

The 217-residue stretch at 5 to 221 (KEHINVAFIG…DLLKPPEKLV (217 aa)) folds into the tr-type G domain. Residues 14 to 21 (GHVDHGKS) are G1. Residue 14–21 (GHVDHGKS) participates in GTP binding. S21 provides a ligand contact to Mg(2+). The G2 stretch occupies residues 70 to 74 (GVTID). The segment at 91–94 (DCPG) is G3. GTP is bound by residues 91–95 (DCPGH) and 146–149 (NKMD). A G4 region spans residues 146-149 (NKMD). The tract at residues 185–187 (SAY) is G5.

It belongs to the TRAFAC class translation factor GTPase superfamily. Classic translation factor GTPase family. EF-Tu/EF-1A subfamily.

It localises to the cytoplasm. It carries out the reaction GTP + H2O = GDP + phosphate + H(+). GTP hydrolase that promotes the GTP-dependent binding of aminoacyl-tRNA to the A-site of ribosomes during protein biosynthesis. This is Elongation factor 1-alpha from Archaeoglobus fulgidus (strain ATCC 49558 / DSM 4304 / JCM 9628 / NBRC 100126 / VC-16).